The following is a 2971-amino-acid chain: Reticulocyte-binding protein homolog 1 (2971 aa).

The first 20 residues, 1–20 (MQRWIFCNIVLHILIYLAEF), serve as a signal peptide directing secretion. At 21–2897 (SHEQESYSSN…KKQKNGNHER (2877 aa)) the chain is on the extracellular side. The interval 30–50 (NEKIRKDYSDDNNYEPTPSYE) is disordered. Asn-70, Asn-78, Asn-87, Asn-135, Asn-286, Asn-384, and Asn-417 each carry an N-linked (GlcNAc...) asparagine glycan. The interval 500–833 (LQIVQQKLLE…MQQGYNNLTN (334 aa)) is erythrocyte binding domain (EBD). LRR repeat units follow at residues 528 to 553 (YKNIHDEILNKKNNEITKIIINNIKD) and 607 to 633 (LNNLHTLKQVQNNKIKYEEHIKQILQK). Asn-685 carries an N-linked (GlcNAc...) asparagine glycan. 2 LRR repeats span residues 736 to 758 (IDTISKYILKQKDIELTQHVYTD) and 785 to 808 (QETLKQITHIVNNIKTIKKDLLKE). N-linked (GlcNAc...) asparagine glycans are attached at residues Asn-830, Asn-892, Asn-1000, and Asn-1010. LRR repeat units follow at residues 993-1018 (LKILKILNISLKACEKNNKSINTLND) and 1356-1381 (LRNINLQEIKNNIIKIFKEFKSAHKE). A glycan (N-linked (GlcNAc...) asparagine) is linked at Asn-1425. The stretch at 1466–1489 (AKYMENIDTYKNNIEIISKQINPE) is one LRR 7 repeat. A glycan (N-linked (GlcNAc...) asparagine) is linked at Asn-1496. LRR repeat units follow at residues 1512–1537 (YKQINNIIINSNQLKNEAFTIDELQN), 1586–1609 (SQNINHVSIYTEQLHNLYIKLEEE), and 1611–1636 (EQMKTLYHKSNVLHNQINFNEDAFIN). 5 N-linked (GlcNAc...) asparagine glycosylation sites follow: Asn-1664, Asn-1692, Asn-1718, Asn-1816, and Asn-1844. 2 LRR repeats span residues 1700–1723 (LQELKQVQENVEKVKDIYNQTIKY) and 1809–1834 (LKLFVDINSTNNNLDNMLSEINSIQN). Residues 1880–1903 (QNEIRNMNLEKNFMLDKSKKIDEE) form an LRR 13 repeat. N-linked (GlcNAc...) asparagine glycosylation is found at Asn-1913 and Asn-1918. One copy of the LRR 14 repeat lies at 1944-1967 (KENIEKIKQEINTLSDVFKKPFFF). 6 N-linked (GlcNAc...) asparagine glycosylation sites follow: Asn-2054, Asn-2207, Asn-2289, Asn-2300, Asn-2338, and Asn-2405. Residues 2523–2548 (IKDIDNVFIKIQNNKFEQIQKYIEII) form an LRR 15 repeat. 2 N-linked (GlcNAc...) asparagine glycosylation sites follow: Asn-2598 and Asn-2752. Residues 2731 to 2754 (ENIFDNIQLKKKDIDDIIININNT) form an LRR 16 repeat. Basic and acidic residues-rich tracts occupy residues 2773 to 2782 (KVDEKSEINN) and 2795 to 2804 (QKNKIKDHNL). Disordered regions lie at residues 2773–2825 (KVDE…MKEQ) and 2840–2862 (HHVHNHNHNHNQNQKDSTKLQEQ). A glycan (N-linked (GlcNAc...) asparagine) is linked at Asn-2811. The segment covering 2814–2825 (EESHQNEQMKEQ) has biased composition (basic and acidic residues). A helical membrane pass occupies residues 2898-2918 (MYFASGIVVSILFLSSLGFVI). At 2919–2971 (NSKNNKQEYDKEQEKQQQNDFVCDNNKMDDKSTQKYGRNQEEVMEISFDNDYI) the chain is on the cytoplasmic side.

May in part interact with AMA1 in the moving tight junction between the parasite and the erythrocyte membranes; the interaction may facilitate junction formation and active invasion. In terms of processing, proteolytically processed into multiple fragments following schizont rupture. In the mature schizont stage prior to merozoite release, full length RH1 is processed post-Golgi into a 240 kDa N-terminal form and a 120 kDa C-terminal form containing the transmembrane region. Both forms appear not to form a complex. However, they appear to remain in close proximity in late schizonts. Following merozoite invasion of host erythrocytes, the 240 kDa form is further processed into a 140 kDa form which may be involved in the disengagement of the ligand-receptor complex required during the invasion process. Also, the 120 kDa is further cleaved into a 110 kDa form and a transmembrane 9 kDa form probably by ROM4.

Its subcellular location is the cell membrane. It localises to the secreted. It is found in the cell junction. The protein localises to the tight junction. The protein resides in the cytoplasmic vesicle. Its subcellular location is the secretory vesicle. It localises to the rhoptry. Functionally, during the asexual blood stage, binds to a sialic acid containing receptor on the surface of the host erythrocyte and thus is involved in merozoite invasion. Binds erythrocytes via a neuraminidase sensitive and trypsin-, chymotrypsin-resistant receptor. After merozoite attachment and reorientation, RH1 binding to its erythrocyte receptor triggers an increase in intracellular Ca(2+) within the parasite resulting in the release of microneme proteins such as EBA175 which in turn leads to the formation of the tight junction between parasite and host cell. This is Reticulocyte-binding protein homolog 1 from Plasmodium falciparum (isolate 3D7).